A 177-amino-acid chain; its full sequence is Large ribosomal subunit protein uL6 (177 aa).

This sequence belongs to the universal ribosomal protein uL6 family. Part of the 50S ribosomal subunit.

Its function is as follows. This protein binds to the 23S rRNA, and is important in its secondary structure. It is located near the subunit interface in the base of the L7/L12 stalk, and near the tRNA binding site of the peptidyltransferase center. This is Large ribosomal subunit protein uL6 from Pectobacterium carotovorum subsp. carotovorum (strain PC1).